We begin with the raw amino-acid sequence, 122 residues long: E3 ubiquitin-protein ligase PPP1R11 (122 aa).

The segment covering methionine 1–isoleucine 12 has biased composition (polar residues). The interval methionine 1–isoleucine 33 is disordered. A Phosphothreonine modification is found at threonine 20. Residues histidine 55–cysteine 65 form an atypical RING finger domain 1 region. Residues glutamine 72 to histidine 122 are disordered. The segment covering serine 78–glycine 87 has biased composition (acidic residues). An atypical RING finger domain 2 region spans residues cysteine 88–histidine 97. A compositionally biased stretch (low complexity) spans threonine 111–histidine 122.

The enzyme catalyses S-ubiquitinyl-[E2 ubiquitin-conjugating enzyme]-L-cysteine + [acceptor protein]-L-lysine = [E2 ubiquitin-conjugating enzyme]-L-cysteine + N(6)-ubiquitinyl-[acceptor protein]-L-lysine.. The protein operates within protein modification; protein ubiquitination. Functionally, atypical E3 ubiquitin-protein ligase which ubiquitinates TLR2 at 'Lys-754' leading to its degradation by the proteasome. Inhibitor of protein phosphatase 1. The chain is E3 ubiquitin-protein ligase PPP1R11 (ppp1r11) from Danio rerio (Zebrafish).